The primary structure comprises 1460 residues: Cilia- and flagella-associated protein 43 (1460 aa).

WD repeat units lie at residues 46–87 (EGRY…HLQC), 91–132 (VATV…RLVK), 184–221 (SKGH…MKNY), 303–342 (RRRS…AGHT), 428–468 (IFAC…DSAS), 529–569 (MRDH…MKLP), 589–628 (FGRG…IHYS), 911–951 (EIDP…VTEV), and 1129–1170 (NRRF…CRAV). 2 coiled-coil regions span residues 1170-1214 (VVEA…AEEA) and 1399-1446 (LGEH…LREA).

This sequence belongs to the CFAP43 family.

It is found in the cell projection. It localises to the cilium. Its subcellular location is the flagellum. The protein localises to the cytoplasm. The protein resides in the cytoskeleton. It is found in the flagellum axoneme. In terms of biological role, flagellar protein involved in flagellum axoneme organization and function. This chain is Cilia- and flagella-associated protein 43, found in Trypanosoma brucei brucei (strain 927/4 GUTat10.1).